The following is a 394-amino-acid chain: Galactose-3-O-sulfotransferase 2 (394 aa).

Residues 1–8 (MWGSQHRS) lie on the Cytoplasmic side of the membrane. A helical; Signal-anchor for type II membrane protein membrane pass occupies residues 9–29 (FQVALWFLVLAVFLLVGFLHV). The Lumenal portion of the chain corresponds to 30 to 394 (DFRLLIPDKV…TPKDIPFLKK (365 aa)). N-linked (GlcNAc...) asparagine glycosylation is found at Asn-72, Asn-176, Asn-284, and Asn-326.

Belongs to the galactose-3-O-sulfotransferase family.

The protein localises to the golgi apparatus. Its subcellular location is the golgi stack membrane. It participates in protein modification; carbohydrate sulfation. Strongly inhibited by Cu(2+) and Zn(2+). Transfers a sulfate group to the hydroxyl group at C3 of non-reducing beta-galactosyl residues. Acts both on type 1 (Gal-beta-1,3-GlcNAc) and type 2 (Gal-beta-1,4-GlcNAc) chains with similar efficiency. This chain is Galactose-3-O-sulfotransferase 2 (Gal3st2), found in Mus musculus (Mouse).